The sequence spans 90 residues: Probable two-component-system connector protein YmgA (90 aa).

The span at 63-80 (SDSGGPNRRTATADNKSM) shows a compositional bias: polar residues. The segment at 63–90 (SDSGGPNRRTATADNKSMFNGKKINRIH) is disordered.

Probably a connector protein for RcsB/C regulation of biofilm formation, providing additional signal input into the two-component signaling pathway. May serve to stimulate biofilm maturation, probably via the Rcs phosphorelay. Mild overexpression at 16 degrees Celsius increases the production of colanic acid, an exopolysaccharide and matrix component, and reduces adhesive curli fimbriae expression. Both of these effects require RcsB. The protein is Probable two-component-system connector protein YmgA (ymgA) of Escherichia coli (strain K12).